A 541-amino-acid chain; its full sequence is Glutamyl-tRNA(Gln) amidotransferase subunit A, chloroplastic/mitochondrial (541 aa).

Active-site charge relay system residues include Lys121 and Ser196. Ser220 acts as the Acyl-ester intermediate in catalysis.

It belongs to the amidase family. GatA subfamily. As to quaternary structure, subunit of the heterotrimeric GatCAB amidotransferase (AdT) complex, composed of A, B and C subunits.

It is found in the mitochondrion. It localises to the plastid. Its subcellular location is the chloroplast stroma. It catalyses the reaction L-glutamyl-tRNA(Gln) + L-glutamine + ATP + H2O = L-glutaminyl-tRNA(Gln) + L-glutamate + ADP + phosphate + H(+). Allows the formation of correctly charged Gln-tRNA(Gln) through the transamidation of misacylated Glu-tRNA(Gln) in chloroplasts and mitochondria. The reaction takes place in the presence of glutamine and ATP through an activated gamma-phospho-Glu-tRNA(Gln). In Sorghum bicolor (Sorghum), this protein is Glutamyl-tRNA(Gln) amidotransferase subunit A, chloroplastic/mitochondrial.